The chain runs to 331 residues: Phenylalanine--tRNA ligase alpha subunit (331 aa).

Glutamate 252 is a Mg(2+) binding site.

The protein belongs to the class-II aminoacyl-tRNA synthetase family. Phe-tRNA synthetase alpha subunit type 1 subfamily. Tetramer of two alpha and two beta subunits. Mg(2+) serves as cofactor.

It is found in the cytoplasm. It carries out the reaction tRNA(Phe) + L-phenylalanine + ATP = L-phenylalanyl-tRNA(Phe) + AMP + diphosphate + H(+). In Xanthomonas oryzae pv. oryzae (strain MAFF 311018), this protein is Phenylalanine--tRNA ligase alpha subunit.